Reading from the N-terminus, the 341-residue chain is MNKSKEAETDITQIFPNLDILPKKFSAKELAERRIKKLHVAPGSIFMNRWSIEGVIGNGGYGQIFMVMDVKKNDERAMKIEPKLRAEVITKRMIMEQQVLMKMQGKTHIPTMYASGFNDQFNFIIMQLLSMNVGDFRKRSPLGRLSKETVGRIAYQTLNALKDIHDMGYVHRDVKPANICFGVHAQNRHILYLLDFGLVRRFKTESGVCIPWRINAGFKGTERYVSVRVHEKLEQTPWDDAFSVLYTAYELVVGELPWRYLEDIHEIHGVKKLMNEVTKNGEMFKDIASILVDFHKMILECDPVVELPYEKLLECLKCLYSPKSLLEPYDWEDGYKTTLNI.

The Protein kinase domain maps to Trp50 to Leu326. Residues Ile56–Ile64 and Lys79 each bind ATP. Catalysis depends on Asp173, which acts as the Proton acceptor.

It belongs to the protein kinase superfamily. CK1 Ser/Thr protein kinase family. Casein kinase I subfamily.

The enzyme catalyses L-seryl-[protein] + ATP = O-phospho-L-seryl-[protein] + ADP + H(+). It catalyses the reaction L-threonyl-[protein] + ATP = O-phospho-L-threonyl-[protein] + ADP + H(+). The polypeptide is Putative casein kinase I C03C10.2 (Caenorhabditis elegans).